Here is a 133-residue protein sequence, read N- to C-terminus: ATP synthase epsilon chain, chloroplastic (133 aa).

The protein belongs to the ATPase epsilon chain family. As to quaternary structure, F-type ATPases have 2 components, CF(1) - the catalytic core - and CF(0) - the membrane proton channel. CF(1) has five subunits: alpha(3), beta(3), gamma(1), delta(1), epsilon(1). CF(0) has three main subunits: a, b and c.

The protein localises to the plastid. It is found in the chloroplast thylakoid membrane. In terms of biological role, produces ATP from ADP in the presence of a proton gradient across the membrane. In Eucalyptus globulus subsp. globulus (Tasmanian blue gum), this protein is ATP synthase epsilon chain, chloroplastic.